Here is a 336-residue protein sequence, read N- to C-terminus: Small ribosomal subunit protein RACK1y (336 aa).

WD repeat units lie at residues 15 to 55, 74 to 113, 116 to 155, 164 to 205, 208 to 247, 249 to 287, and 297 to 336; these read GHND…TAVA, GHSH…TTRR, GHTK…KYTI, GHTG…LRTK, GHNG…MLYK, DAGA…VMQD, and SQML…GYAI.

This sequence belongs to the WD repeat G protein beta family. Ribosomal protein RACK1 subfamily. As to quaternary structure, homodimer and heterodimer with RACK1A.

Functionally, component of the RACK1 regulatory proteins that play a role in multiple signal transduction pathways. This Oryza sativa subsp. japonica (Rice) protein is Small ribosomal subunit protein RACK1y (RACK1B).